An 86-amino-acid chain; its full sequence is Small ribosomal subunit protein bS18 (86 aa).

The protein belongs to the bacterial ribosomal protein bS18 family. Part of the 30S ribosomal subunit. Forms a tight heterodimer with protein bS6.

Binds as a heterodimer with protein bS6 to the central domain of the 16S rRNA, where it helps stabilize the platform of the 30S subunit. The protein is Small ribosomal subunit protein bS18 of Campylobacter curvus (strain 525.92).